The primary structure comprises 291 residues: N-acetylmannosamine kinase (291 aa).

Residues 5-12 (AIDIGGTK) and 132-139 (GVGGGVVS) contribute to the ATP site. Positions 156, 166, 168, and 173 each coordinate Zn(2+).

Belongs to the ROK (NagC/XylR) family. NanK subfamily. As to quaternary structure, homodimer.

It catalyses the reaction an N-acyl-D-mannosamine + ATP = an N-acyl-D-mannosamine 6-phosphate + ADP + H(+). The protein operates within amino-sugar metabolism; N-acetylneuraminate degradation; D-fructose 6-phosphate from N-acetylneuraminate: step 2/5. In terms of biological role, catalyzes the phosphorylation of N-acetylmannosamine (ManNAc) to ManNAc-6-P. This is N-acetylmannosamine kinase from Escherichia coli O7:K1 (strain IAI39 / ExPEC).